The primary structure comprises 372 residues: F-box/kelch-repeat protein At5g48990 (372 aa).

The F-box domain maps to 14–60 (SSPNPSLPEDLIVSILARVSRSYYTNLSVVSKTFRSILTSPELYKTR). The Kelch repeat unit spans residues 176-222 (RTYFPGSSEKPDSLNCVEVYNTNTQTWNPVPPQKRKLKFGNMEGKIY).

The protein is F-box/kelch-repeat protein At5g48990 of Arabidopsis thaliana (Mouse-ear cress).